Here is a 423-residue protein sequence, read N- to C-terminus: MAEKIQAIRGMNDILPAESHQWEYFEGVLRGLLADYGYQNIRTPIVESTPLFIRSIGEVTDIVEKEMYTFTDSLNGDSLTLRPEGTAGTLRAVVEHNLLYNTTQKLWYTGPMFRHERPQKGRYRQFHQIGIEALGFAGPDIDAEIILMTADLWKRLGISDFVQLEINTLGNKEERAAHREALIKYLEGHVDILDEDGKRRLYTNPLRVLDTKNPAMQDMANQAPRLIDYLGAESRAHYDGWKAMIEAVGIRYVENPRLVRGLDYYNQSVFEWVTTELGAQGTVCAGGRYDGLTEQIGGKPAPGIGFGMGMERVLLLLADKDLLPARKAADVYIVQQGEGAPVYAMQLAQDLRAAGLSVIQHLGEASFKSQMKKADQSGARWALVVGENEIRQQQVAVKPLRDGTEQQTVARTDIVSHLAGRMA.

The protein belongs to the class-II aminoacyl-tRNA synthetase family. As to quaternary structure, homodimer.

It is found in the cytoplasm. The enzyme catalyses tRNA(His) + L-histidine + ATP = L-histidyl-tRNA(His) + AMP + diphosphate + H(+). The polypeptide is Histidine--tRNA ligase (Laribacter hongkongensis (strain HLHK9)).